A 286-amino-acid chain; its full sequence is Lipoyl synthase (286 aa).

[4Fe-4S] cluster-binding residues include C29, C34, C40, C55, C59, C62, and S265. The Radical SAM core domain occupies 41–254 (WGSGTATFMI…EKIAYSLGFS (214 aa)).

It belongs to the radical SAM superfamily. Lipoyl synthase family. [4Fe-4S] cluster is required as a cofactor.

The protein localises to the cytoplasm. The catalysed reaction is [[Fe-S] cluster scaffold protein carrying a second [4Fe-4S](2+) cluster] + N(6)-octanoyl-L-lysyl-[protein] + 2 oxidized [2Fe-2S]-[ferredoxin] + 2 S-adenosyl-L-methionine + 4 H(+) = [[Fe-S] cluster scaffold protein] + N(6)-[(R)-dihydrolipoyl]-L-lysyl-[protein] + 4 Fe(3+) + 2 hydrogen sulfide + 2 5'-deoxyadenosine + 2 L-methionine + 2 reduced [2Fe-2S]-[ferredoxin]. The protein operates within protein modification; protein lipoylation via endogenous pathway; protein N(6)-(lipoyl)lysine from octanoyl-[acyl-carrier-protein]: step 2/2. Functionally, catalyzes the radical-mediated insertion of two sulfur atoms into the C-6 and C-8 positions of the octanoyl moiety bound to the lipoyl domains of lipoate-dependent enzymes, thereby converting the octanoylated domains into lipoylated derivatives. In Sulfolobus acidocaldarius (strain ATCC 33909 / DSM 639 / JCM 8929 / NBRC 15157 / NCIMB 11770), this protein is Lipoyl synthase.